A 362-amino-acid chain; its full sequence is Adenosine deaminase (362 aa).

Residues His19 and His21 each contribute to the Zn(2+) site. Substrate contacts are provided by His21, Asp23, and Gly181. His208 contributes to the Zn(2+) binding site. Glu211 acts as the Proton donor in catalysis. Asp300 is a Zn(2+) binding site.

Belongs to the metallo-dependent hydrolases superfamily. Adenosine and AMP deaminases family. Adenosine deaminase subfamily. Requires Zn(2+) as cofactor.

It catalyses the reaction adenosine + H2O + H(+) = inosine + NH4(+). The enzyme catalyses 2'-deoxyadenosine + H2O + H(+) = 2'-deoxyinosine + NH4(+). Catalyzes the hydrolytic deamination of adenosine and 2-deoxyadenosine. The protein is Adenosine deaminase of Mycobacterium ulcerans (strain Agy99).